The sequence spans 245 residues: Inner membrane protein YgaZ (245 aa).

Residues 1–24 (MESPTPQPAPGSATFMEGCKDSLP) lie on the Cytoplasmic side of the membrane. The chain crosses the membrane as a helical span at residues 25-45 (IVISYIPVAFAFGLNATRLGF). The Periplasmic portion of the chain corresponds to 46-63 (SPLESVFFSCIIYAGASQ). The helical transmembrane segment at 64–84 (FVITAMLAAGSSLWIAALTVM) threads the bilayer. Residues 85–109 (AMDVRHVLYGPSLRSRIIQRLQKSK) lie on the Cytoplasmic side of the membrane. A helical transmembrane segment spans residues 110 to 130 (TALWAFGLTDEVFAAATAKLV). Over 131–140 (RNNRRWSENW) the chain is Periplasmic. A helical transmembrane segment spans residues 141–161 (MIGIAFSSWSSWVFGTVIGAF). Topologically, residues 162-172 (SGSGLLQGYPA) are cytoplasmic. Residues 173 to 193 (VEAALGFMLPALFMSFLLASF) traverse the membrane as a helical segment. The Periplasmic segment spans residues 194–205 (QRKQSLCVTAAL). A helical membrane pass occupies residues 206–226 (VGALAGVTLFSIPVAILAGIV). Residues 227 to 245 (CGCLTALIQAFWQGAPDEL) lie on the Cytoplasmic side of the membrane.

The protein belongs to the AzlC family.

The protein resides in the cell inner membrane. The polypeptide is Inner membrane protein YgaZ (ygaZ) (Escherichia coli (strain K12)).